A 79-amino-acid chain; its full sequence is Crassicorin-I (79 aa).

The signal sequence occupies residues 1–19; the sequence is MKLFLVSIVLVGMLVLAAA. The propeptide occupies 20-39; it reads RPERDIDSFDEQEEKGFVKR. 3 disulfide bridges follow: Cys-43–Cys-76, Cys-45–Cys-69, and Cys-59–Cys-77.

Belongs to the sea anemone type 3 (BDS) potassium channel toxin family. As to expression, highly expressed by the mesenteries. Moderately expressed by the pharynx. Weakly expressed by the gonad and pedal disk. No expression in tentacle.

It localises to the secreted. Its subcellular location is the nematocyst. Peptide with both antimicrobial and neurotoxin activities. Cationic AMP with antibacterial activity against both Gram-positive bacteria (B.subtilis, MIC=11.49 ug/mL) and Gram-negative bacteria (E.coli (MIC=12.21 ug/mL) and S.enterica (MIC=11.95 ug/mL)). Shows no significant antimicrobial activity against bacteria S.aureus and P.aeruginosa, as well as the fungus C.albicans. In vivo, induces reversible paralytic activity towards the shrimp P.paucidens. May act by impairing sodium or potassium channels in the prey. The sequence is that of Crassicorin-I from Urticina crassicornis (Mottled anemone).